The sequence spans 225 residues: 7-cyano-7-deazaguanine synthase (225 aa).

10–20 provides a ligand contact to ATP; sequence FSGGQDSTTLA. 4 residues coordinate Zn(2+): cysteine 190, cysteine 205, cysteine 208, and cysteine 211.

The protein belongs to the QueC family. It depends on Zn(2+) as a cofactor.

The catalysed reaction is 7-carboxy-7-deazaguanine + NH4(+) + ATP = 7-cyano-7-deazaguanine + ADP + phosphate + H2O + H(+). It participates in purine metabolism; 7-cyano-7-deazaguanine biosynthesis. In terms of biological role, catalyzes the ATP-dependent conversion of 7-carboxy-7-deazaguanine (CDG) to 7-cyano-7-deazaguanine (preQ(0)). This Helicobacter pylori (strain J99 / ATCC 700824) (Campylobacter pylori J99) protein is 7-cyano-7-deazaguanine synthase.